A 224-amino-acid chain; its full sequence is Octanoyltransferase (224 aa).

The region spanning 29–224 (PGTPDELWLC…GDRLESYLSP (196 aa)) is the BPL/LPL catalytic domain. Residues 68 to 75 (RGGQVTYH), 157 to 159 (ALG), and 170 to 172 (GLA) each bind substrate. C188 (acyl-thioester intermediate) is an active-site residue.

It belongs to the LipB family.

It is found in the cytoplasm. It carries out the reaction octanoyl-[ACP] + L-lysyl-[protein] = N(6)-octanoyl-L-lysyl-[protein] + holo-[ACP] + H(+). Its pathway is protein modification; protein lipoylation via endogenous pathway; protein N(6)-(lipoyl)lysine from octanoyl-[acyl-carrier-protein]: step 1/2. Catalyzes the transfer of endogenously produced octanoic acid from octanoyl-acyl-carrier-protein onto the lipoyl domains of lipoate-dependent enzymes. Lipoyl-ACP can also act as a substrate although octanoyl-ACP is likely to be the physiological substrate. The sequence is that of Octanoyltransferase from Methylibium petroleiphilum (strain ATCC BAA-1232 / LMG 22953 / PM1).